A 348-amino-acid polypeptide reads, in one-letter code: NADH-cytochrome b5 reductase 2 (348 aa).

Residues 41 to 61 (TLLYGAAAAAVAGAGYYFLGG) form a helical membrane-spanning segment. An FAD-binding FR-type domain is found at 97-202 (QGWVSLKLEE…KGPLPKYPWT (106 aa)). FAD is bound at residue 205 to 240 (KHGHIALVAGGTGITPMFQLCRAIFNNPDDQTKVTL).

This sequence belongs to the flavoprotein pyridine nucleotide cytochrome reductase family. It depends on FAD as a cofactor.

The protein resides in the mitochondrion outer membrane. The enzyme catalyses 2 Fe(III)-[cytochrome b5] + NADH = 2 Fe(II)-[cytochrome b5] + NAD(+) + H(+). Functionally, may mediate the reduction of outer membrane cytochrome b5. The sequence is that of NADH-cytochrome b5 reductase 2 (MCR1) from Chaetomium globosum (strain ATCC 6205 / CBS 148.51 / DSM 1962 / NBRC 6347 / NRRL 1970) (Soil fungus).